Consider the following 419-residue polypeptide: Zinc finger protein Pegasus (419 aa).

Lys5 participates in a covalent cross-link: Glycyl lysine isopeptide (Lys-Gly) (interchain with G-Cter in SUMO2). 3 C2H2-type zinc fingers span residues 82 to 104 (LKCR…IRIH), 110 to 132 (HRCH…MRSH), and 138 to 161 (YKCE…RRKH). Lys185 is covalently cross-linked (Glycyl lysine isopeptide (Lys-Gly) (interchain with G-Cter in SUMO2)). Composition is skewed to polar residues over residues 223 to 236 (QTDS…TTPT) and 262 to 273 (LSSLPPENQNPA). Disordered stretches follow at residues 223 to 247 (QTDS…QELM) and 262 to 356 (LSSL…PALP). Residues 290-311 (QPSTQAVVSAVSASIPQSSSPT) show a composition bias toward low complexity. Over residues 332–349 (SEPSAHTSTPSIGNSQPS) the composition is skewed to polar residues. C2H2-type zinc fingers lie at residues 364-386 (HHCQ…MGCH) and 392-416 (FQCN…RGQH).

This sequence belongs to the Ikaros C2H2-type zinc-finger protein family. As to quaternary structure, self-associates. Interacts with other family members; IKZF1, IKZF2, IKZF3 and IKZF4. As to expression, expressed in brain, heart, skeletal muscle, kidney, and liver. Expressed in the hematopoietic cell lines MOLT-4, NALM-6 and K-562. Highly expressed in THP-1 and M-07e cell lines, which have characteristics of myeloid and early megakaryocytic cells respectively.

Its subcellular location is the nucleus. In terms of biological role, transcriptional repressor that binds the core 5'GNNTGTNG-3' DNA consensus sequence. Involved in megakaryocyte differentiation. This chain is Zinc finger protein Pegasus (IKZF5), found in Homo sapiens (Human).